The primary structure comprises 124 residues: Small ribosomal subunit protein uS12 (124 aa).

The interval 1 to 23 (MATINQLVRKPRVRQKQKSNVPA) is disordered. Asp89 is subject to 3-methylthioaspartic acid. The segment at 103-124 (DTAGVGDRRQGRSKYGAKRPKG) is disordered. Basic residues predominate over residues 113-124 (GRSKYGAKRPKG).

Belongs to the universal ribosomal protein uS12 family. As to quaternary structure, part of the 30S ribosomal subunit. Contacts proteins S8 and S17. May interact with IF1 in the 30S initiation complex.

Its function is as follows. With S4 and S5 plays an important role in translational accuracy. Interacts with and stabilizes bases of the 16S rRNA that are involved in tRNA selection in the A site and with the mRNA backbone. Located at the interface of the 30S and 50S subunits, it traverses the body of the 30S subunit contacting proteins on the other side and probably holding the rRNA structure together. The combined cluster of proteins S8, S12 and S17 appears to hold together the shoulder and platform of the 30S subunit. This Nitrosococcus oceani (strain ATCC 19707 / BCRC 17464 / JCM 30415 / NCIMB 11848 / C-107) protein is Small ribosomal subunit protein uS12.